Consider the following 1295-residue polypeptide: Protein glp-1 (1295 aa).

Positions 1-15 (MRVLLILLAFFAPIA) are cleaved as a signal peptide. The Extracellular portion of the chain corresponds to 16 to 764 (SQLMGGECGR…NEIDEGWSRS (749 aa)). 4 EGF-like domains span residues 19–58 (MGGECGREGACSVNGKCYNGKLIETYWCRCKKGFGGAFCE), 117–152 (GVNPCDSDPCNNGLCYPFYGGFQCICNNGYGGSYCE), 154–190 (GIDHCAQNECAEGSTCVNSVYNYYCDCPIGKSGRYCE), and 190–230 (ERTE…EFCN). 37 disulfide bridges follow: Cys-23–Cys-35, Cys-29–Cys-46, Cys-48–Cys-57, Cys-121–Cys-131, Cys-126–Cys-140, Cys-142–Cys-151, Cys-158–Cys-169, Cys-163–Cys-178, Cys-180–Cys-189, Cys-201–Cys-206, Cys-220–Cys-229, Cys-236–Cys-248, Cys-242–Cys-257, Cys-259–Cys-268, Cys-275–Cys-286, Cys-280–Cys-296, Cys-298–Cys-307, Cys-329–Cys-342, Cys-336–Cys-347, Cys-349–Cys-358, Cys-373–Cys-384, Cys-378–Cys-394, Cys-396–Cys-405, Cys-411–Cys-422, Cys-416–Cys-431, Cys-433–Cys-442, Cys-450–Cys-461, Cys-455–Cys-467, Cys-469–Cys-478, Cys-496–Cys-519, Cys-501–Cys-514, Cys-510–Cys-526, Cys-536–Cys-560, Cys-542–Cys-555, Cys-551–Cys-567, Cys-582–Cys-595, and Cys-591–Cys-607. The EGF-like 5; calcium-binding domain maps to 232–269 (DKNECLIEETCVNNSTCFNLHGDFTCTCKPGYAGKYCE). N-linked (GlcNAc...) asparagine glycans are attached at residues Asn-244 and Asn-245. EGF-like domains follow at residues 271-308 (AIDMCKDYVCQNDGYCAHDSNQMPICYCEQGFTGQRCE), 316-359 (GGIH…DRCE), 369-406 (DIQSCKYNPCVNNATCIDLKNSGYSCHCPLGFYGLNCE), 407-443 (QHLLCTPTTCANGGTCEGVNGVIRCNCPNGFSGDYCE), and 446-479 (DRQLCSRHPCKNGGVCKNTGYCECQYGYTGPTCE). A glycan (N-linked (GlcNAc...) asparagine) is linked at Asn-333. Asn-381 carries N-linked (GlcNAc...) asparagine glycosylation. LNR repeat units lie at residues 496 to 532 (CEQRKCMDLASNGICNPECNLEECNFDGGDCSGGQRP), 536 to 577 (CQYP…CPAH), and 581 to 612 (HCIERRGDGVCNLECSFIGCGFDGGDCNNGTE). 2 N-linked (GlcNAc...) asparagine glycosylation sites follow: Asn-609 and Asn-675. A helical membrane pass occupies residues 765-786 (QVILFACIAFLAFGTVVAGVIA). The Cytoplasmic portion of the chain corresponds to 787–1295 (KNGPERSRKR…AEQMNGSFYC (509 aa)). ANK repeat units follow at residues 961–990 (DENTALMLAVRAHRVRLSVVLLREGANPTI), 994–1023 (SERSALHEAVVNKDLRILRHLLTDKRLLKE), 1030–1062 (NGMTALMLVARELGKHQVEMAELLLSKGAKLDY), 1074–1103 (KGRTALHYAAMHDNEEMVIMLVRRSSNKDK), and 1107–1136 (DGRTPIMLAAKEGCEKTVQYLALNDASLGI). The tract at residues 1177–1244 (IVKSGHGAKS…TTSTPNRMET (68 aa)) is disordered. Residues 1201–1210 (KTPTSAASSR) are compositionally biased toward polar residues. Residues 1221 to 1239 (DGSFSSPSPHYYPTTTSTP) are compositionally biased toward low complexity.

In terms of assembly, interacts with sel-10. When activated, the glp-1/Notch intracellular domain (NICD) may become a component of a complex consisting of at least the NICD, lag-1 and lag-3. Post-translationally, upon binding its ligands, it is cleaved (S2 cleavage) in its extracellular domain, close to the transmembrane domain. S2 cleavage is probably mediated by the metalloproteases adm-4 and sup-17. It is then cleaved (S3 cleavage) downstream of its transmembrane domain, releasing it from the cell membrane; S3 cleavage requires a multiprotein gamma-secretase complex, which may include presenilin sel-12. Expressed in the distal mitotic region of the germ line. May be absent from the gonadal distal tip cell (DTC).

The protein localises to the cell membrane. The protein resides in the cell projection. It localises to the axon. Its subcellular location is the nucleus. In terms of biological role, essential signaling protein which has a major role in germline and embryonic development; involved in cell fate decisions that require cell-cell interactions. Probable membrane-bound receptor for putative ligands lag-2 and apx-1. Upon ligand activation, and releasing from the cell membrane, the glp-1/Notch intracellular domain (NICD) probably forms a transcriptional activator complex with lag-1 and lag-3 and regulates expression of various genes; targets in the germline include lst-1 and sygl-1. Involved in the specification of the cell fates of the blastomeres, ABa and ABp. Proper signaling by glp-1 induces ABa descendants to produce anterior pharyngeal cells, and ABp descendants to adopt a different fate. Contributes to the establishment of the dorsal-ventral axis in early embryos. Required in postmitotic neurons in order to maintain the developmentally arrested larval state known as dauer, probably in response to lag-2. Regulates germ cell mitotic proliferation probably by regulating MAP kinase phosphatase lip-1 expression. Required for oocyte growth control. Plays a negative role in lifespan. In Caenorhabditis elegans, this protein is Protein glp-1.